We begin with the raw amino-acid sequence, 128 residues long: uncharacterized protein (128 aa).

A disulfide bridge links C10 with C13.

Belongs to the ArsC family.

This is an uncharacterized protein from Ureaplasma parvum serovar 3 (strain ATCC 700970).